The chain runs to 70 residues: Small ribosomal subunit protein bS21 (70 aa).

Belongs to the bacterial ribosomal protein bS21 family.

This Nautilia profundicola (strain ATCC BAA-1463 / DSM 18972 / AmH) protein is Small ribosomal subunit protein bS21.